Reading from the N-terminus, the 368-residue chain is o-succinylbenzoate synthase (368 aa).

Lys-183 functions as the Proton donor in the catalytic mechanism. Mg(2+) is bound by residues Asp-213, Glu-239, and Asp-264. Residue Lys-290 is the Proton acceptor of the active site.

It belongs to the mandelate racemase/muconate lactonizing enzyme family. MenC type 1 subfamily. Monomer. Requires a divalent metal cation as cofactor.

It catalyses the reaction (1R,6R)-6-hydroxy-2-succinyl-cyclohexa-2,4-diene-1-carboxylate = 2-succinylbenzoate + H2O. It participates in quinol/quinone metabolism; 1,4-dihydroxy-2-naphthoate biosynthesis; 1,4-dihydroxy-2-naphthoate from chorismate: step 4/7. The protein operates within cofactor biosynthesis; phylloquinone biosynthesis. Its function is as follows. Converts 2-succinyl-6-hydroxy-2,4-cyclohexadiene-1-carboxylate (SHCHC) to 2-succinylbenzoate (OSB). Does not show N-succinylamino acid racemase (NSAR) activity with N-succinyl-L-phenylglycine as substrate. In Desulfotalea psychrophila (strain LSv54 / DSM 12343), this protein is o-succinylbenzoate synthase.